The sequence spans 57 residues: uncharacterized protein (57 aa).

Residues 31 to 57 (HHQTSSFNPMPSEVSLHTSHNFPHTTF) are disordered. Residues 33 to 57 (QTSSFNPMPSEVSLHTSHNFPHTTF) are compositionally biased toward polar residues.

This is an uncharacterized protein from Invertebrate iridescent virus 6 (IIV-6).